Here is a 298-residue protein sequence, read N- to C-terminus: Protoheme IX farnesyltransferase (298 aa).

9 helical membrane passes run 23–43 (LLLLFTMYTAYIVGGGLGKPY), 47–67 (LVVLTLGFITIAAVTALNMYF), 93–113 (VFIATVAATIVSVILAWRIIN), 115–135 (HFALAIVIGFLFDIVAYTYLL), 143–163 (IIAGAVAGGAPALGGWAAAAG), 169–189 (ALLFSLIVATWVPSHIWFLAT), 211–231 (IAVASGIGLGSLVMGYSIVGL), 236–256 (VIGTVSLIVGVIAAIAIFHLA), and 278–298 (MMLGLVFLVMMLEKVVSYIIS).

It belongs to the UbiA prenyltransferase family. Protoheme IX farnesyltransferase subfamily.

It localises to the cell membrane. The catalysed reaction is heme b + (2E,6E)-farnesyl diphosphate + H2O = Fe(II)-heme o + diphosphate. It participates in porphyrin-containing compound metabolism; heme O biosynthesis; heme O from protoheme: step 1/1. Converts heme B (protoheme IX) to heme O by substitution of the vinyl group on carbon 2 of heme B porphyrin ring with a hydroxyethyl farnesyl side group. This Hyperthermus butylicus (strain DSM 5456 / JCM 9403 / PLM1-5) protein is Protoheme IX farnesyltransferase.